The sequence spans 209 residues: Lectin (209 aa).

Homodimer; non-covalently linked.

Binds chito-oligosaccherides. Has hemagglutinating activity towards rabbit erythrocytes. The protein is Lectin of Luffa acutangula (Ridged gourd).